Here is a 195-residue protein sequence, read N- to C-terminus: ATP-dependent Clp protease proteolytic subunit (195 aa).

Ser102 functions as the Nucleophile in the catalytic mechanism. Residue His125 is part of the active site.

This sequence belongs to the peptidase S14 family. Component of the chloroplastic Clp protease core complex.

It localises to the plastid. Its subcellular location is the chloroplast stroma. It catalyses the reaction Hydrolysis of proteins to small peptides in the presence of ATP and magnesium. alpha-casein is the usual test substrate. In the absence of ATP, only oligopeptides shorter than five residues are hydrolyzed (such as succinyl-Leu-Tyr-|-NHMec, and Leu-Tyr-Leu-|-Tyr-Trp, in which cleavage of the -Tyr-|-Leu- and -Tyr-|-Trp bonds also occurs).. Its function is as follows. Cleaves peptides in various proteins in a process that requires ATP hydrolysis. Has a chymotrypsin-like activity. Plays a major role in the degradation of misfolded proteins. In Phaseolus vulgaris (Kidney bean), this protein is ATP-dependent Clp protease proteolytic subunit.